We begin with the raw amino-acid sequence, 491 residues long: Peptidoglycan D,D-transpeptidase PbpA (491 aa).

Over 1–7 (MNASLRR) the chain is Cytoplasmic. A helical; Signal-anchor for type II membrane protein membrane pass occupies residues 8 to 28 (ISVTVMALIVLLLLNATMTQV). Residues 29–491 (FTADGLRADP…VIEAALQGEP (463 aa)) lie on the Periplasmic side of the membrane. The tract at residues 160–484 (GAVVALEPST…AAPIGRAVIE (325 aa)) is transpeptidase. S222 serves as the catalytic Acyl-ester intermediate.

Belongs to the transpeptidase family.

It localises to the cell inner membrane. It catalyses the reaction Preferential cleavage: (Ac)2-L-Lys-D-Ala-|-D-Ala. Also transpeptidation of peptidyl-alanyl moieties that are N-acyl substituents of D-alanine.. It functions in the pathway cell wall biogenesis; peptidoglycan biosynthesis. Functionally, transpeptidase that catalyzes cross-linking of the peptidoglycan cell wall. Required for the regulation of cell length. The polypeptide is Peptidoglycan D,D-transpeptidase PbpA (pbpA) (Mycobacterium tuberculosis (strain CDC 1551 / Oshkosh)).